The following is a 651-amino-acid chain: Maternal embryonic leucine zipper kinase (651 aa).

The region spanning 13-265 is the Protein kinase domain; it reads YELHETVGTG…VKHLLNHPWL (253 aa). ATP contacts are provided by residues 19-27 and K42; that span reads VGTGGFAKV. D134 acts as the Proton acceptor in catalysis. T169 carries the post-translational modification Phosphothreonine; by autocatalysis. S173 carries the post-translational modification Phosphoserine; by autocatalysis. Residues 284–323 form a UBA-like region; it reads IDEDCVTELSVFYKYSRTSTTRLISEWSYDHITASYLLLH. Residues 328 to 651 form an autoinhibitory region region; it reads HGKAVRLKHP…VEDILSSCKV (324 aa). Positions 410–490 are disordered; that stretch reads SAPATPVVQR…TPTKKPIGTG (81 aa). A Phosphothreonine modification is found at T414. Over residues 423–441 the composition is skewed to basic and acidic residues; it reads HKNEDKENSNTAVARDENV. A phosphothreonine mark is found at T449, T451, T481, and T483. Basic and acidic residues predominate over residues 471 to 483; the sequence is QTKEKNQSKETPT. A phosphoserine mark is found at S498, S505, and S517. The KA1 domain occupies 602–651; the sequence is SDFGKVTMQFELEVCQLSKSEVVGIRRQRLKGDAWVYKRLVEDILSSCKV.

Belongs to the protein kinase superfamily. CAMK Ser/Thr protein kinase family. SNF1 subfamily. In terms of processing, autophosphorylated: autophosphorylation of the T-loop at Thr-169 and Ser-173 is required for activation. Phosphorylated by the maturation promoting factor (MPF), composed of cdk1 and a cyclin-B. Also phosphorylated by some MAPK. Phosphorylated during oocyte maturation. Dephosphorylation destabilizes the protein. There is some ambiguity for some phosphosites: Thr-481/Thr-483 and Ser-505/Ser-517. Post-translationally, degraded when cells exit mitosis.

The protein resides in the cell membrane. The catalysed reaction is L-seryl-[protein] + ATP = O-phospho-L-seryl-[protein] + ADP + H(+). It catalyses the reaction L-threonyl-[protein] + ATP = O-phospho-L-threonyl-[protein] + ADP + H(+). Its activity is regulated as follows. Activated by autophosphorylation of the T-loop at Thr-169 and Ser-173: in contrast to other members of the SNF1 subfamily, phosphorylation at Thr-169 is not mediated by STK11/LKB1 but via autophosphorylation instead. Serine/threonine-protein kinase involved in various processes such as cell cycle regulation, self-renewal of stem cells, apoptosis and splicing regulation. Also plays a role in primitive hematopoiesis, possibly by affecting the expression of genes critical for hematopoiesis. Plays a role in cytokinesis during early development. This is Maternal embryonic leucine zipper kinase (melk) from Xenopus laevis (African clawed frog).